A 513-amino-acid chain; its full sequence is Ribonuclease Y (513 aa).

A helical membrane pass occupies residues 6–26 (YIIIAVVIIIICVILGLYVVD). The disordered stretch occupies residues 35-59 (EASKEARRLKEEAERDAEAKKKEAI). Positions 203 to 288 (TVHVVNLPND…EMVEKAKKEV (86 aa)) constitute a KH domain. Positions 329 to 422 (VLKHSIEVSH…VQAADAISAA (94 aa)) constitute an HD domain.

It belongs to the RNase Y family.

The protein resides in the cell membrane. Its function is as follows. Endoribonuclease that initiates mRNA decay. The sequence is that of Ribonuclease Y from Clostridium botulinum (strain Okra / Type B1).